The chain runs to 436 residues: Probable 4-aminobutyrate aminotransferase (436 aa).

An N6-(pyridoxal phosphate)lysine modification is found at K281.

Belongs to the class-III pyridoxal-phosphate-dependent aminotransferase family. Pyridoxal 5'-phosphate is required as a cofactor.

It carries out the reaction 4-aminobutanoate + 2-oxoglutarate = succinate semialdehyde + L-glutamate. The enzyme catalyses (S)-3-amino-2-methylpropanoate + 2-oxoglutarate = 2-methyl-3-oxopropanoate + L-glutamate. The protein operates within amino-acid degradation; 4-aminobutanoate degradation. The polypeptide is Probable 4-aminobutyrate aminotransferase (gabT) (Bacillus subtilis (strain 168)).